The primary structure comprises 89 residues: Large ribosomal subunit protein bL28 (89 aa).

It belongs to the bacterial ribosomal protein bL28 family.

This Chlamydia caviae (strain ATCC VR-813 / DSM 19441 / 03DC25 / GPIC) (Chlamydophila caviae) protein is Large ribosomal subunit protein bL28.